Here is a 284-residue protein sequence, read N- to C-terminus: Acetyl-coenzyme A carboxylase carboxyl transferase subunit beta (284 aa).

Residues Leu-25–Ala-284 form the CoA carboxyltransferase N-terminal domain. Cys-29, Cys-32, Cys-48, and Cys-51 together coordinate Zn(2+). A C4-type zinc finger spans residues Cys-29–Cys-51.

It belongs to the AccD/PCCB family. In terms of assembly, acetyl-CoA carboxylase is a heterohexamer composed of biotin carboxyl carrier protein (AccB), biotin carboxylase (AccC) and two subunits each of ACCase subunit alpha (AccA) and ACCase subunit beta (AccD). Zn(2+) serves as cofactor.

It localises to the cytoplasm. The enzyme catalyses N(6)-carboxybiotinyl-L-lysyl-[protein] + acetyl-CoA = N(6)-biotinyl-L-lysyl-[protein] + malonyl-CoA. Its pathway is lipid metabolism; malonyl-CoA biosynthesis; malonyl-CoA from acetyl-CoA: step 1/1. In terms of biological role, component of the acetyl coenzyme A carboxylase (ACC) complex. Biotin carboxylase (BC) catalyzes the carboxylation of biotin on its carrier protein (BCCP) and then the CO(2) group is transferred by the transcarboxylase to acetyl-CoA to form malonyl-CoA. This Hydrogenovibrio crunogenus (strain DSM 25203 / XCL-2) (Thiomicrospira crunogena) protein is Acetyl-coenzyme A carboxylase carboxyl transferase subunit beta.